We begin with the raw amino-acid sequence, 317 residues long: Porphobilinogen deaminase (317 aa).

The residue at position 240 (cysteine 240) is an S-(dipyrrolylmethanemethyl)cysteine.

Belongs to the HMBS family. Monomer. Dipyrromethane serves as cofactor.

It carries out the reaction 4 porphobilinogen + H2O = hydroxymethylbilane + 4 NH4(+). It functions in the pathway porphyrin-containing compound metabolism; protoporphyrin-IX biosynthesis; coproporphyrinogen-III from 5-aminolevulinate: step 2/4. In terms of biological role, tetrapolymerization of the monopyrrole PBG into the hydroxymethylbilane pre-uroporphyrinogen in several discrete steps. The sequence is that of Porphobilinogen deaminase from Nitratidesulfovibrio vulgaris (strain DSM 19637 / Miyazaki F) (Desulfovibrio vulgaris).